The chain runs to 125 residues: Ribosome-binding factor A (125 aa).

This sequence belongs to the RbfA family. In terms of assembly, monomer. Binds 30S ribosomal subunits, but not 50S ribosomal subunits or 70S ribosomes.

It is found in the cytoplasm. One of several proteins that assist in the late maturation steps of the functional core of the 30S ribosomal subunit. Associates with free 30S ribosomal subunits (but not with 30S subunits that are part of 70S ribosomes or polysomes). Required for efficient processing of 16S rRNA. May interact with the 5'-terminal helix region of 16S rRNA. The sequence is that of Ribosome-binding factor A from Carboxydothermus hydrogenoformans (strain ATCC BAA-161 / DSM 6008 / Z-2901).